A 278-amino-acid polypeptide reads, in one-letter code: Small ribosomal subunit protein uS2 (278 aa).

A disordered region spans residues 235-278 (QRRKDHGEGGQQAAGGGRGQRDEINVYQGGRGGRGGGPRQQQAS). 2 stretches are compositionally biased toward gly residues: residues 243-252 (GGQQAAGGGR) and 263-272 (GGRGGRGGGP).

This sequence belongs to the universal ribosomal protein uS2 family.

In Sorangium cellulosum (strain So ce56) (Polyangium cellulosum (strain So ce56)), this protein is Small ribosomal subunit protein uS2.